We begin with the raw amino-acid sequence, 297 residues long: ATP synthase subunit gamma, mitochondrial (297 aa).

It belongs to the ATPase gamma chain family. As to quaternary structure, F-type ATPases have 2 components, CF(1) - the catalytic core - and CF(0) - the membrane proton channel. CF(1) has five subunits: alpha(3), beta(3), gamma(1), delta(1), epsilon(1). CF(0) has three main subunits: a, b and c.

It localises to the mitochondrion. It is found in the mitochondrion inner membrane. Functionally, mitochondrial membrane ATP synthase (F(1)F(0) ATP synthase or Complex V) produces ATP from ADP in the presence of a proton gradient across the membrane which is generated by electron transport complexes of the respiratory chain. F-type ATPases consist of two structural domains, F(1) - containing the extramembraneous catalytic core, and F(0) - containing the membrane proton channel, linked together by a central stalk and a peripheral stalk. During catalysis, ATP synthesis in the catalytic domain of F(1) is coupled via a rotary mechanism of the central stalk subunits to proton translocation. Part of the complex F(1) domain and the central stalk which is part of the complex rotary element. The gamma subunit protrudes into the catalytic domain formed of alpha(3)beta(3). Rotation of the central stalk against the surrounding alpha(3)beta(3) subunits leads to hydrolysis of ATP in three separate catalytic sites on the beta subunits. This Drosophila melanogaster (Fruit fly) protein is ATP synthase subunit gamma, mitochondrial.